A 2718-amino-acid polypeptide reads, in one-letter code: Zinc finger protein 40 (2718 aa).

Disordered regions lie at residues 58–182, 210–256, and 335–373; these read HLKK…CISS, LSQK…AESQ, and GLTS…PMPI. Position 141 is a phosphoserine (Ser-141). The span at 142-158 shows a compositional bias: basic and acidic residues; it reads ELRRWRSEGADPAKFSD. 2 stretches are compositionally biased toward polar residues: residues 164-182 and 237-256; these read DSSS…CISS and KNSS…AESQ. Residues 406–428 form a C2H2-type 1 zinc finger; sequence YICEYCNRACAKPSVLLKHIRSH. Residue Thr-429 is modified to Phosphothreonine. The segment at 434–456 adopts a C2H2-type 2 zinc-finger fold; sequence YPCVTCGFSFKTKSNLYKHKKSH. Residues Ser-476, Ser-479, Ser-492, Ser-495, Ser-571, and Ser-577 each carry the phosphoserine modification. A disordered region spans residues 484 to 511; sequence SIHSDVEDSGESEEEGATDERQHDLGAM. Over residues 490–500 the composition is skewed to acidic residues; it reads EDSGESEEEGA. The segment at 574–727 is disordered; that stretch reads RTDSPKAMDP…TPSALPTGEK (154 aa). A compositionally biased stretch (basic and acidic residues) spans 576–585; that stretch reads DSPKAMDPKP. A compositionally biased stretch (polar residues) spans 588-612; that stretch reads SSAQKQKDLQVTNVQPLSANMSQGG. Positions 617 to 626 are enriched in basic and acidic residues; it reads ETNENSHQKG. Composition is skewed to polar residues over residues 644–687 and 698–721; these read AQLQ…QTVS and STEQ…TPSA. Phosphoserine is present on residues Ser-670 and Ser-681. The CCHC HIVEP-type zinc-finger motif lies at 956–986; that stretch reads GTMFECETCRNRYRKLENFENHKKFYCSELH. The disordered stretch occupies residues 1022–1062; it reads WEQTPQIRKRRKMKSVGDDEELQQNESGTSPKSSEGLQFQN. 6 positions are modified to phosphoserine: Ser-1036, Ser-1051, Ser-1091, Ser-1158, Ser-1161, and Ser-1180. A compositionally biased stretch (polar residues) spans 1045–1062; that stretch reads QNESGTSPKSSEGLQFQN. The interval 1138–1169 is disordered; it reads HTNSLSRPNSFDKPEPFERASPVSFQELNRTG. Residues 1160 to 1169 are compositionally biased toward polar residues; sequence VSFQELNRTG. Basic and acidic residues-rich tracts occupy residues 1202 to 1219 and 1246 to 1259; these read LRGE…ERHV and DLEA…KSEK. Disordered stretches follow at residues 1202–1282, 1384–1414, and 1523–1548; these read LRGE…PKKK, RSKS…SRVG, and SHQS…VLSG. Residue Thr-1268 is modified to Phosphothreonine. 2 stretches are compositionally biased toward low complexity: residues 1394-1406 and 1523-1536; these read TPPQ…ELQP and SHQS…VSTQ. Phosphoserine is present on residues Ser-1735, Ser-1740, Ser-1749, and Ser-1753. A compositionally biased stretch (polar residues) spans 1871 to 1883; the sequence is VRSSPAPSENTHI. Residues 1871-1911 are disordered; sequence VRSSPAPSENTHISPLKCTDNNQERKSPGVKNQGDKVNIQE. A phosphoserine mark is found at Ser-1884 and Ser-2033. 2 consecutive C2H2-type zinc fingers follow at residues 2088–2110 and 2116–2140; these read YICE…IRTH and YHCT…SKAH. Disordered regions lie at residues 2155 to 2228, 2265 to 2303, 2327 to 2381, and 2572 to 2718; these read DEQD…PVST, SDYN…HQMS, SPSS…THLF, and PASQ…VIAT. Over residues 2164–2175 the composition is skewed to basic and acidic residues; the sequence is EKQRFSYERSGY. Residues 2176–2198 are compositionally biased toward acidic residues; the sequence is DLEESDGPDEDDNENEDDDEDSQ. Polar residues-rich tracts occupy residues 2199–2226 and 2288–2300; these read AESV…QDPV and TIPS…SPCH. Phosphoserine occurs at positions 2327 and 2599. Residues 2573-2608 show a composition bias toward polar residues; it reads ASQSKACETQPKQTSVASANQVSRTESPQGLPTVQR. Residues 2623–2637 show a composition bias toward basic and acidic residues; sequence DHARLDGLSKMDTEK. The span at 2651–2663 shows a compositional bias: polar residues; sequence TSIQGQPASTSQP. Phosphoserine is present on residues Ser-2669 and Ser-2682.

Interacts with UTP4.

The protein resides in the nucleus. Its subcellular location is the cytoplasm. Functionally, this protein specifically binds to the DNA sequence 5'-GGGACTTTCC-3' which is found in the enhancer elements of numerous viral promoters such as those of SV40, CMV, or HIV-1. In addition, related sequences are found in the enhancer elements of a number of cellular promoters, including those of the class I MHC, interleukin-2 receptor, and interferon-beta genes. It may act in T-cell activation. Involved in activating HIV-1 gene expression. Isoform 2 and isoform 3 also bind to the IPCS (IRF1 and p53 common sequence) DNA sequence in the promoter region of interferon regulatory factor 1 and p53 genes and are involved in transcription regulation of these genes. Isoform 2 does not activate HIV-1 gene expression. Isoform 2 and isoform 3 may be involved in apoptosis. This Homo sapiens (Human) protein is Zinc finger protein 40 (HIVEP1).